The following is a 332-amino-acid chain: Fructose-1,6-bisphosphatase class 1 (332 aa).

Residues Glu89, Asp110, Leu112, and Asp113 each coordinate Mg(2+). Substrate-binding positions include 113–116, Asn206, Tyr239, 257–259, and Lys269; these read DGSS and YLY. Glu275 lines the Mg(2+) pocket.

It belongs to the FBPase class 1 family. As to quaternary structure, homotetramer. The cofactor is Mg(2+).

Its subcellular location is the cytoplasm. The catalysed reaction is beta-D-fructose 1,6-bisphosphate + H2O = beta-D-fructose 6-phosphate + phosphate. It functions in the pathway carbohydrate biosynthesis; gluconeogenesis. The chain is Fructose-1,6-bisphosphatase class 1 from Klebsiella pneumoniae (strain 342).